The chain runs to 703 residues: Elongation factor G (703 aa).

A tr-type G domain is found at glutamate 9–leucine 292. Residues alanine 18–threonine 25, aspartate 91–histidine 95, and asparagine 145–aspartate 148 contribute to the GTP site.

It belongs to the TRAFAC class translation factor GTPase superfamily. Classic translation factor GTPase family. EF-G/EF-2 subfamily.

The protein localises to the cytoplasm. In terms of biological role, catalyzes the GTP-dependent ribosomal translocation step during translation elongation. During this step, the ribosome changes from the pre-translocational (PRE) to the post-translocational (POST) state as the newly formed A-site-bound peptidyl-tRNA and P-site-bound deacylated tRNA move to the P and E sites, respectively. Catalyzes the coordinated movement of the two tRNA molecules, the mRNA and conformational changes in the ribosome. The chain is Elongation factor G from Leuconostoc mesenteroides subsp. mesenteroides (strain ATCC 8293 / DSM 20343 / BCRC 11652 / CCM 1803 / JCM 6124 / NCDO 523 / NBRC 100496 / NCIMB 8023 / NCTC 12954 / NRRL B-1118 / 37Y).